We begin with the raw amino-acid sequence, 502 residues long: Probable ADP-dependent glucokinase (502 aa).

The N-terminal stretch at 1–32 (MFSETFVPSIFSYKHRLLHLSVLFFIVPYWYS) is a signal peptide. The ADPK domain maps to 44 to 497 (SVETAMFLSW…LLYSQFYRLN (454 aa)). 2 N-linked (GlcNAc...) asparagine glycosylation sites follow: asparagine 89 and asparagine 190. Mg(2+) contacts are provided by glutamate 290, glutamate 320, and aspartate 481. Aspartate 481 (proton acceptor) is an active-site residue.

Belongs to the ADP-dependent glucokinase family. Monomer. The cofactor is Mg(2+).

It localises to the secreted. It catalyses the reaction D-glucose + ADP = D-glucose 6-phosphate + AMP + H(+). It participates in carbohydrate degradation; glycolysis. Catalyzes the phosphorylation of D-glucose to D-glucose 6-phosphate using ADP as the phosphate donor. GDP and CDP can replace ADP, but with reduced efficiency. The protein is Probable ADP-dependent glucokinase of Caenorhabditis elegans.